The chain runs to 285 residues: (3S)-malyl-CoA thioesterase (285 aa).

Residues R70 and E122 each contribute to the substrate site. 2 residues coordinate Mg(2+): E122 and D148.

Belongs to the HpcH/HpaI aldolase family. As to quaternary structure, homodimer or homotrimer. Requires Mg(2+) as cofactor.

It catalyses the reaction (S)-malyl-CoA + H2O = (S)-malate + CoA + H(+). Its function is as follows. Catalyzes the hydrolysis of (3S)-malyl-CoA to (3S)-malate and free CoA. Inactive towards beta-methylmalyl-CoA and other CoA esters. The chain is (3S)-malyl-CoA thioesterase from Cereibacter sphaeroides (strain ATCC 17029 / ATH 2.4.9) (Rhodobacter sphaeroides).